The sequence spans 201 residues: Dephospho-CoA kinase (201 aa).

Positions 4–201 constitute a DPCK domain; it reads AFFVTASIAC…VIQEISKGNM (198 aa). 12–17 serves as a coordination point for ATP; sequence ACGKST.

Belongs to the CoaE family.

It localises to the cytoplasm. The enzyme catalyses 3'-dephospho-CoA + ATP = ADP + CoA + H(+). Its pathway is cofactor biosynthesis; coenzyme A biosynthesis; CoA from (R)-pantothenate: step 5/5. Functionally, catalyzes the phosphorylation of the 3'-hydroxyl group of dephosphocoenzyme A to form coenzyme A. This Campylobacter jejuni subsp. jejuni serotype O:2 (strain ATCC 700819 / NCTC 11168) protein is Dephospho-CoA kinase.